Reading from the N-terminus, the 336-residue chain is NADH-cytochrome b5 reductase 2 (336 aa).

The chain crosses the membrane as a helical span at residues 28–50 (GGSSNGALYVGIGAAGLAGAYIY). An FAD-binding FR-type domain is found at 84-189 (QGFISLLLDK…KGPIPKYPWS (106 aa)). 192 to 227 (KHEHIALIAGGTGITPMWQTARAIFKNPEDKTKVTL) is a binding site for FAD.

It belongs to the flavoprotein pyridine nucleotide cytochrome reductase family. FAD serves as cofactor.

It is found in the mitochondrion outer membrane. It carries out the reaction 2 Fe(III)-[cytochrome b5] + NADH = 2 Fe(II)-[cytochrome b5] + NAD(+) + H(+). Its function is as follows. May mediate the reduction of outer membrane cytochrome b5. The chain is NADH-cytochrome b5 reductase 2 (MCR1) from Phaeosphaeria nodorum (strain SN15 / ATCC MYA-4574 / FGSC 10173) (Glume blotch fungus).